We begin with the raw amino-acid sequence, 629 residues long: Probable potassium transport system protein Kup 3 (629 aa).

12 helical membrane-spanning segments follow: residues 20–40 (LSLSALGIVYGDIGTSPLYTF), 61–81 (VSLIIWTLIIIASVKYIHFAL), 106–126 (PFIIAVGLMGAALIYGDGTIT), 143–163 (PSLKYYVLPIAITILITLFAI), 171–191 (IGKAFGPVMAFWFLTIGILGA), 209–229 (GLSFLFSNGATGFFILCGVFL), 253–273 (WFGLAFPSLIFNYLGQAALVL), 291–311 (FLLPLIILSTVATIIASQAII), 343–363 (IYIGVVNWLLMLATLGLTIGF), 372–392 (AYGIAVSATMLCTTLLLFIAL), 400–420 (IITSGLVAGLFMIVDASFFAA), and 425–445 (FINGGYIPITLAIIIYSMMYI).

The protein belongs to the HAK/KUP transporter (TC 2.A.72) family.

It localises to the cell inner membrane. It catalyses the reaction K(+)(in) + H(+)(in) = K(+)(out) + H(+)(out). Its function is as follows. Transport of potassium into the cell. Likely operates as a K(+):H(+) symporter. The chain is Probable potassium transport system protein Kup 3 from Legionella pneumophila subsp. pneumophila (strain Philadelphia 1 / ATCC 33152 / DSM 7513).